The chain runs to 293 residues: Xylanase inhibitor protein XIP (293 aa).

A signal peptide spans methionine 1–alanine 21. A GH18 domain is found at glycine 31–leucine 293. Intrachain disulfides connect cysteine 50–cysteine 92 and cysteine 189–cysteine 218.

This sequence belongs to the glycosyl hydrolase 18 family. Xylanase inhibitor subfamily. Expressed in mature grain.

Its subcellular location is the secreted. Its function is as follows. Fungal xylanase inhibitor. Possesses competitive inhibiting activity against several fungal endo-1,4-beta-D-xylanases belonging to glycoside hydrolase family 10 (GH10) and family 11 (GH11). May function in plant defense against secreted fungal pathogen xylanases. Is similar to class III chitinases, but does not exhibit chitinase activity. The protein is Xylanase inhibitor protein XIP of Oryza sativa subsp. japonica (Rice).